The following is a 261-amino-acid chain: Spermatogenesis-associated protein 46 (261 aa).

Residues 140-159 (SSSSSPENTCPREATKKSRH) form a disordered region.

Testis-specific.

The protein resides in the nucleus membrane. Its function is as follows. Plays a role in spermiogenesis and fertilization. The polypeptide is Spermatogenesis-associated protein 46 (Homo sapiens (Human)).